A 145-amino-acid polypeptide reads, in one-letter code: Leghemoglobin-2 (145 aa).

Positions 3–145 constitute a Globin domain; the sequence is AFSDKQEGLV…ELAAAIKKAY (143 aa). 2 positions are modified to nitrated tyrosine: Tyr-26 and Tyr-31. Position 46 (Ser-46) interacts with heme b. Position 46 is a phosphoserine (Ser-46). Position 62 (His-62) interacts with O2. Residues Lys-65, His-93, and Lys-96 each contribute to the heme b site. Tyr-134 bears the Nitrated tyrosine mark.

The protein belongs to the plant globin family. As to quaternary structure, monomer. In terms of processing, nitrated in effective nodules and particularly in hypoxic conditions; this mechanism may play a protective role in the symbiosis by buffering toxic peroxynitrite NO(2)(-). Nitration level decrease during nodule senescence. Phosphorylation at Ser-46 disrupts the molecular environment of its porphyrin ring oxygen binding pocket, thus leading to a reduced oxygen consumption and to the delivery of oxygen O(2) to symbiosomes. Root nodules.

The protein resides in the cytoplasm. The protein localises to the cytosol. Its subcellular location is the nucleus. In terms of biological role, leghemoglobin that reversibly binds oxygen O(2) through a pentacoordinated heme iron. In root nodules, facilitates the diffusion of oxygen to the bacteroids while preventing the bacterial nitrogenase from being inactivated by buffering dioxygen, nitric oxide and carbon monoxide, and promoting the formation of reactive oxygen species (ROS, e.g. H(2)O(2)). This role is essential for symbiotic nitrogen fixation (SNF). This is Leghemoglobin-2 from Vigna unguiculata (Cowpea).